A 416-amino-acid polypeptide reads, in one-letter code: Gamma-glutamyl phosphate reductase (416 aa).

It belongs to the gamma-glutamyl phosphate reductase family.

The protein localises to the cytoplasm. It carries out the reaction L-glutamate 5-semialdehyde + phosphate + NADP(+) = L-glutamyl 5-phosphate + NADPH + H(+). It functions in the pathway amino-acid biosynthesis; L-proline biosynthesis; L-glutamate 5-semialdehyde from L-glutamate: step 2/2. Catalyzes the NADPH-dependent reduction of L-glutamate 5-phosphate into L-glutamate 5-semialdehyde and phosphate. The product spontaneously undergoes cyclization to form 1-pyrroline-5-carboxylate. The polypeptide is Gamma-glutamyl phosphate reductase (Vibrio vulnificus (strain YJ016)).